A 2467-amino-acid chain; its full sequence is Polyprotein P1234 (2467 aa).

The Alphavirus-like MT domain maps to 27–258 (ESQQVTPNDH…ESRKLLRSWH (232 aa)). A nsP1 membrane-binding region spans residues 243-262 (GSTLYTESRKLLRSWHLPSV). Residues C416 and C418 are each lipidated (S-palmitoyl cysteine; by host). The (+)RNA virus helicase ATP-binding domain occupies 689-841 (DLINPPFHEF…HNICTRVLHK (153 aa)). 720 to 727 (GVPGSGKS) contacts a ribonucleoside 5'-triphosphate. A (+)RNA virus helicase C-terminal domain is found at 842–990 (SISRRCTLPV…LEEWHEEHDG (149 aa)). Residues 1003–1325 (DPFQNKAKVC…QKLSSMYACN (323 aa)) form the Peptidase C9 domain. The tract at residues 1004–1023 (PFQNKAKVCWAKCLVQVLET) is nucleolus localization signal. Catalysis depends on C1012, which acts as the For cysteine protease nsP2 activity. Residues 1056–1065 (TRYYGVDLDS) carry the Nuclear export signal motif. H1081 serves as the catalytic For cysteine protease nsP2 activity. Positions 1180–1184 (PHKRV) match the Nuclear localization signal motif. A Macro domain is found at 1333–1492 (APSYRVRRAD…KIQEAIDRRT (160 aa)). Residues D1342, N1356, G1364, G1444, and F1446 each contribute to the ADP-D-ribose site. C1594, C1596, C1619, and C1637 together coordinate Zn(2+). Residues 1768-1803 (KVATEPPLEPEAPIPAPRKRRTTSTSPPHNPEDFVP) form a disordered region. Over residues 1774–1783 (PLEPEAPIPA) the composition is skewed to pro residues. Short sequence motifs (FGDF; binding to host G3BP1) lie at residues 1820-1823 (FGDL) and 1841-1844 (FGDI). One can recognise a RdRp catalytic domain in the interval 2221 to 2336 (DAVLETDIAS…HGVRSDPLMA (116 aa)).

In terms of assembly, interacts with non-structural protein 3. Interacts with RNA-directed RNA polymerase nsP4. Interacts with protease nsP2. interacts with itself. Interacts with mRNA-capping enzyme nsP1. Interacts with host DDX1. Interacts with host DDX3. Interacts (via C-terminus) with host G3BP1; this interaction inhibits the formation of host stress granules on viral mRNAs and the nsp3-G3BP1 complexes bind viral RNAs and probably orchestrate the assembly of viral replication complexes. Interacts (via C-terminus) with host G3BP2; this interaction inhibits the formation of host stress granules on viral mRNAs and the nsp3-G3BP2 complexes bind viral RNAs and probably orchestrate the assembly of viral replication complexes. As to quaternary structure, interacts with mRNA-capping enzyme nsP1. Interacts with protease nsP2. interacts with itself. In terms of assembly, interacts with RNA-directed RNA polymerase nsP4. Interacts with mRNA-capping enzyme nsP1. Interacts with KPNA1/karyopherin-alpha1; this interaction probably allows the active transport of protease nsP2 into the host nucleus. Mg(2+) is required as a cofactor. Mn(2+) serves as cofactor. Post-translationally, specific enzymatic cleavages in vivo yield mature proteins. The processing of the polyprotein is temporally regulated. In early stages (1.7 hpi), P1234 is first cleaved in trans through its nsP2 protease activity, releasing P123' and nsP4, which associate to form the early replication complex. At the same time, P1234 is also cut at the nsP1/nsP2 site early in infection but with lower efficiency. After replication of the viral minus-strand RNAs (4 hpi), the polyproteins are cut at the nsP1/nsP2 and nsP2/nsP3 sites very efficiently, preventing accumulation of P123' and P1234 and allowing the formation of the late replication complex. NsP3'/nsP4 site is not cleaved anymore and P34 is produced rather than nsP4. Specific enzymatic cleavages in vivo yield mature proteins. The processing of the polyprotein is temporally regulated. In early stages (1.7 hpi), P123 is cleaved at the nsP1/nsP2 site with low efficiency. After replication of the viral minus-strand RNAs (4 hpi), the polyproteins are cut at the nsP1/nsP2 and nsP2/nsP3 sites very efficiently, preventing accumulation of P123 and allowing the formation of the late replication complex. In terms of processing, palmitoylated by host palmitoyltransferases ZDHHC2 and ZDHHC19. Post-translationally, phosphorylated by host on serines and threonines. Ubiquitinated; targets the protein for rapid degradation via the ubiquitin system. Nsp4 is present in extremely low quantities due to low frequency of translation through the amber stop-codon and the degradation by the ubiquitin pathway.

The protein resides in the host cytoplasmic vesicle membrane. Its subcellular location is the host cell membrane. It localises to the host cell projection. It is found in the host filopodium. The protein localises to the host nucleus. The protein resides in the host cytoplasm. It catalyses the reaction GTP + S-adenosyl-L-methionine = N(7)-methyl-GTP + S-adenosyl-L-homocysteine. It carries out the reaction N(7)-methyl-GTP + L-histidyl-[protein] = N(tele)-(N(7)-methylguanosine 5'-phospho)-L-histidyl-[protein] + diphosphate. The catalysed reaction is N(tele)-(N(7)-methylguanosine 5'-phospho)-L-histidyl-[protein] + a 5'-end diphospho-(purine-ribonucleoside) in mRNA + H(+) = a 5'-end (N(7)-methyl 5'-triphosphoguanosine)-(purine-ribonucleoside) in mRNA + L-histidyl-[protein]. The enzyme catalyses a 5'-end triphospho-ribonucleoside in mRNA + H2O = a 5'-end diphospho-ribonucleoside in mRNA + phosphate + H(+). It catalyses the reaction a ribonucleoside 5'-triphosphate + H2O = a ribonucleoside 5'-diphosphate + phosphate + H(+). It carries out the reaction ATP + H2O = ADP + phosphate + H(+). The catalysed reaction is RNA(n) + a ribonucleoside 5'-triphosphate = RNA(n+1) + diphosphate. The enzyme catalyses RNA(n) + ATP = RNA(n)-3'-adenine ribonucleotide + diphosphate. It catalyses the reaction 4-O-(ADP-D-ribosyl)-L-aspartyl-[protein] + H2O = L-aspartyl-[protein] + ADP-D-ribose + H(+). It carries out the reaction 5-O-(ADP-D-ribosyl)-L-glutamyl-[protein] + H2O = L-glutamyl-[protein] + ADP-D-ribose + H(+). The catalysed reaction is ADP-alpha-D-ribose 1''-phosphate + H2O = ADP-D-ribose + phosphate. Inactive precursor of the viral replicase, which is activated by cleavages carried out by the viral protease nsP2. Functionally, the early replication complex formed by the polyprotein P123 and nsP4 synthesizes minus-strand RNAs. As soon P123 is cleaved into mature proteins, the plus-strand RNAs synthesis begins. Its function is as follows. The early replication complex formed by the polyprotein P123' and nsP4 synthesizes minus-strand RNAs. Polyprotein P123' is a short-lived polyprotein that accumulates during early stage of infection. As soon P123' is cleaved into mature proteins, the plus-strand RNAs synthesis begins. In terms of biological role, cytoplasmic capping enzyme that catalyzes two virus-specific reactions: methyltransferase and nsP1 guanylyltransferase. mRNA-capping is necessary since all viral RNAs are synthesized in the cytoplasm, and host capping enzymes are restricted to the nucleus. The enzymatic reaction involves a covalent link between 7-methyl-GMP and nsP1, whereas eukaryotic capping enzymes form a covalent complex only with GMP. nsP1 capping consists in the following reactions: GTP is first methylated into 7-methyl-GMP and then is covalently linked to nsP1 to form the m7GMp-nsP1 complex from which 7-methyl-GMP complex is transferred to the mRNA to create the cap structure. NsP1 is needed for the initiation of the minus-strand RNAs synthesis. Probably serves as a membrane anchor for the replication complex composed of nsP1-nsP4. Palmitoylated nsP1 is remodeling host cell cytoskeleton, and induces filopodium-like structure formation at the surface of the host cell. Multifunctional protein whose N-terminus is part of the RNA polymerase complex and displays NTPase, RNA triphosphatase and helicase activities. NTPase and RNA triphosphatase are involved in viral RNA capping and helicase keeps a check on the dsRNA replication intermediates. The C-terminus harbors a protease that specifically cleaves the polyproteins and releases the mature proteins. Required for the shutoff of minus-strand RNAs synthesis. Specifically inhibits the host IFN response by promoting the nuclear export of host STAT1. Also inhibits host transcription by inducing rapid proteasome-dependent degradation of POLR2A, a catalytic subunit of the RNAPII complex. The resulting inhibition of cellular protein synthesis serves to ensure maximal viral gene expression and to evade host immune response. Functionally, seems to be essential for minus-strand RNAs and subgenomic 26S mRNAs synthesis. Displays mono-ADP-ribosylhydrolase activity. ADP-ribosylation is a post-translational modification that controls various processes of the host cell and the virus probably needs to revert it for optimal viral replication. Binds proteins of FXR family and sequesters them into the viral RNA replication complexes thereby inhibiting the formation of host stress granules on viral mRNAs. The nsp3'-FXR complexes bind viral RNAs and probably orchestrate the assembly of viral replication complexes, thanks to the ability of FXR family members to self-assemble and bind DNA. Its function is as follows. Seems to be essential for minus-strand RNAs and subgenomic 26S mRNAs synthesis. Displays mono-ADP-ribosylhydrolase activity. ADP-ribosylation is a post-translantional modification that controls various processes of the host cell and the virus probably needs to revert it for optimal viral replication. Binds proteins of G3BP family and sequesters them into the viral RNA replication complexes thereby inhibiting the formation of host stress granules on viral mRNAs. The nsp3-G3BP complexes bind viral RNAs and probably orchestrate the assembly of viral replication complexes, thanks to the ability of G3BP family members to self-assemble and bind DNA. In terms of biological role, RNA dependent RNA polymerase. Replicates genomic and antigenomic RNA by recognizing replications specific signals. The early replication complex formed by the polyprotein P123 and nsP4 synthesizes minus-strand RNAs. The late replication complex composed of fully processed nsP1-nsP4 is responsible for the production of genomic and subgenomic plus-strand RNAs. The core catalytic domain of nsP4 also possesses terminal adenylyltransferase (TATase) activity that is probably involved in maintenance and repair of the poly(A) tail, an element required for replication of the viral genome. The polypeptide is Polyprotein P1234 (Getah virus (GETV)).